The chain runs to 504 residues: Transcriptional coactivator YAP1 (504 aa).

2 stretches are compositionally biased toward pro residues: residues 1-12 (MDPGQQPPPQPA) and 20-36 (PSQP…PGQP). Residues 1-59 (MDPGQQPPPQPAPQGQGQPPSQPPQGQGPPSGPGQPAPAATQAAPQAPPAGHQIVHVRG) are disordered. The span at 37–51 (APAATQAAPQAPPAG) shows a compositional bias: low complexity. Phosphoserine; by LATS1 and LATS2 is present on S61. At T63 the chain carries Phosphothreonine. A coiled-coil region spans residues 86-100 (MRLRKLPDSFFKPPE). N6-lactoyllysine is present on K90. The disordered stretch occupies residues 91 to 114 (LPDSFFKPPEPKSHSRQASTDAGT). S105 carries the phosphoserine modification. S109 is subject to Phosphoserine; by LATS1 and LATS2. At T110 the chain carries Phosphothreonine. Phosphothreonine; by MAPK8 and MAPK9 is present on T119. S127 is subject to Phosphoserine; by LATS1 and LATS2. A phosphoserine mark is found at S128 and S131. Positions 133-158 (QLGAVSPGTLTPTGVVSGPAATPTAQ) are disordered. Residue S138 is modified to Phosphoserine; by MAPK8 and MAPK9. T154 is modified (phosphothreonine; by MAPK8 and MAPK9). S164 carries the phosphoserine; by LATS1 and LATS2 modification. 2 consecutive WW domains span residues 171–204 (VPLP…DPRK) and 230–263 (GPLP…DPRL). Residues S274 and S289 each carry the phosphoserine modification. 2 disordered regions span residues 275-309 (QSAP…MRLQ) and 355-407 (LEQD…MSSY). The segment at 291-504 (QGGVMGGSNS…LDKESFLTWL (214 aa)) is transactivation domain. The stretch at 298 to 359 (SNSNQQQQMR…SQLPTLEQDG (62 aa)) forms a coiled coil. The segment covering 355 to 391 (LEQDGGTQNPVSSPGMSQELRTMTTNSSDPFLNSGTY) has biased composition (polar residues). S367 carries the phosphoserine; by MAPK8 and MAPK9 modification. Phosphoserine occurs at positions 371, 381, 382, and 388. S397 is subject to Phosphoserine; by LATS1 and LATS2. Phosphoserine; by CK1 occurs at positions 400 and 403. Y407 is modified (phosphotyrosine; by ABL1). T412 bears the Phosphothreonine; by MAPK8 and MAPK9 mark.

The protein belongs to the YAP1 family. In terms of assembly, part of a complex when phosphorylated that contains DSG3, PKP1, YAP1 and YWHAG; the complex is required for localization of DSG3 and YAP1 to the cell membrane in keratinocytes. Binds to the SH3 domain of the YES kinase. Binds to WBP1 and WBP2. Binds, in vitro, through the WW1 domain, to neural isoforms of ENAH that contain the PPSY motif. The phosphorylated form interacts with YWHAB. Interacts (via WW domains) with LATS1 (via PPxY motif 2). Interacts with LATS2. Interacts with TEAD1, TEAD2, TEAD3 and TEAD4. Interacts with TP73. Interacts with RUNX1. Interacts with HCK. Interacts (via WW domains) with PTPN14 (via PPxY motif 2); this interaction leads to the cytoplasmic sequestration of YAP1 and inhibits its transcriptional coactivator activity. Interacts (when phosphorylated at Ser-127) with SMAD2, SMAD3 and WWTR1. Interacts with PRRG2 (via cytoplasmic domain). Interacts (via WW domains) with PRRG4 (via cytoplasmic domain). Interacts (phosphorylated) with CLDN18; the interaction sequesters YAP1 away from the nucleus and thereby restricts transcription of YAP1 target genes. Interacts with SMAD1. Interacts with AMOTL2, the interaction is required for ubiquitination of AMOTL2 and localization of YAP1 to tight junctions. Interacts with AMOT isoform 1; the interaction facilitates translocation of YAP1 to the cytoplasm and tight junctions. As to quaternary structure, interacts (via WW domain 1) with isoform 3 of ERBB4 (via PPxY motif 2). In terms of processing, phosphorylated by LATS1 and LATS2; leading to cytoplasmic translocation and inactivation. Phosphorylated by ABL1; leading to YAP1 stabilization, enhanced interaction with TP73 and recruitment onto proapoptotic genes; in response to DNA damage. Phosphorylation at Ser-400 and Ser-403 by CK1 is triggered by previous phosphorylation at Ser-397 by LATS proteins and leads to YAP1 ubiquitination by SCF(beta-TRCP) E3 ubiquitin ligase and subsequent degradation. Phosphorylated at Thr-119, Ser-138, Thr-154, Ser-367 and Thr-412 by MAPK8/JNK1 and MAPK9/JNK2, which is required for the regulation of apoptosis by YAP1. Phosphorylated in the nucleus by PRP4K; phosphorylation leads to nuclear exclusion. Lactylation by AARS1 promotes nuclear localization and stabilization of YAP1, leading to increased Hippo signaling pathway. Delactylated by SIRT1. Post-translationally, ubiquitinated by SCF(beta-TRCP) E3 ubiquitin ligase. Increased expression seen in some liver and prostate cancers. Isoforms lacking the transactivation domain found in striatal neurons of patients with Huntington disease (at protein level).

It localises to the cytoplasm. Its subcellular location is the nucleus. The protein localises to the cell junction. It is found in the tight junction. The protein resides in the cell membrane. Transcriptional regulator with dual roles as a coactivator and corepressor. Critical downstream regulatory target in the Hippo signaling pathway, crucial for organ size control and tumor suppression by restricting proliferation and promoting apoptosis. The Hippo signaling pathway core involves a kinase cascade featuring STK3/MST2 and STK4/MST1, along with its regulatory partner SAV1, which phosphorylates and activates LATS1/2 in complex with their regulatory protein, MOB1. This activation leads to the phosphorylation and inactivation of the YAP1 oncoprotein and WWTR1/TAZ. Phosphorylation of YAP1 by LATS1/2 prevents its nuclear translocation, thereby regulating the expression of its target genes. The transcriptional regulation of gene expression requires TEAD transcription factors and modulates cell growth, anchorage-independent growth, and induction of epithelial-mesenchymal transition (EMT). Plays a key role in tissue tension and 3D tissue shape by regulating the cortical actomyosin network, acting via ARHGAP18, a Rho GTPase activating protein that suppresses F-actin polymerization. It also suppresses ciliogenesis by acting as a transcriptional corepressor of TEAD4 target genes AURKA and PLK1. In conjunction with WWTR1, regulates TGFB1-dependent SMAD2 and SMAD3 nuclear accumulation. Synergizes with WBP2 to enhance PGR activity. Its function is as follows. Activates the C-terminal fragment (CTF) of ERBB4 (isoform 3). This chain is Transcriptional coactivator YAP1, found in Homo sapiens (Human).